The sequence spans 137 residues: Protein Flattop homolog (137 aa).

This sequence belongs to the Flattop family.

It localises to the cytoplasm. It is found in the cytoskeleton. The protein localises to the flagellum axoneme. Functionally, microtubule inner protein (MIP) part of the dynein-decorated doublet microtubules (DMTs) in cilia axoneme. Acts as a regulator of cilium basal body docking and positioning in mono- and multiciliated cells. Regulates basal body docking and cilia formation in multiciliated lung cells. Regulates kinocilium positioning and stereocilia bundle morphogenesis in the inner ear. The protein is Protein Flattop homolog of Chlamydomonas reinhardtii (Chlamydomonas smithii).